The chain runs to 293 residues: Proline iminopeptidase (293 aa).

One can recognise an AB hydrolase-1 domain in the interval 28–277 (KPLVLLHGGP…YSRHMPFVEE (250 aa)). The Nucleophile role is filled by S104. D244 is an active-site residue. H271 functions as the Proton donor in the catalytic mechanism.

Belongs to the peptidase S33 family.

The enzyme catalyses Release of N-terminal proline from a peptide.. Its function is as follows. Releases the N-terminal proline from various substrates. This Clostridioides difficile (strain 630) (Peptoclostridium difficile) protein is Proline iminopeptidase.